A 574-amino-acid chain; its full sequence is Proline--tRNA ligase (574 aa).

This sequence belongs to the class-II aminoacyl-tRNA synthetase family. ProS type 1 subfamily. In terms of assembly, homodimer.

The protein localises to the cytoplasm. The enzyme catalyses tRNA(Pro) + L-proline + ATP = L-prolyl-tRNA(Pro) + AMP + diphosphate. Functionally, catalyzes the attachment of proline to tRNA(Pro) in a two-step reaction: proline is first activated by ATP to form Pro-AMP and then transferred to the acceptor end of tRNA(Pro). As ProRS can inadvertently accommodate and process non-cognate amino acids such as alanine and cysteine, to avoid such errors it has two additional distinct editing activities against alanine. One activity is designated as 'pretransfer' editing and involves the tRNA(Pro)-independent hydrolysis of activated Ala-AMP. The other activity is designated 'posttransfer' editing and involves deacylation of mischarged Ala-tRNA(Pro). The misacylated Cys-tRNA(Pro) is not edited by ProRS. The polypeptide is Proline--tRNA ligase (Oleidesulfovibrio alaskensis (strain ATCC BAA-1058 / DSM 17464 / G20) (Desulfovibrio alaskensis)).